The chain runs to 564 residues: Proline--tRNA ligase (564 aa).

Belongs to the class-II aminoacyl-tRNA synthetase family. ProS type 1 subfamily. As to quaternary structure, homodimer.

The protein resides in the cytoplasm. The enzyme catalyses tRNA(Pro) + L-proline + ATP = L-prolyl-tRNA(Pro) + AMP + diphosphate. In terms of biological role, catalyzes the attachment of proline to tRNA(Pro) in a two-step reaction: proline is first activated by ATP to form Pro-AMP and then transferred to the acceptor end of tRNA(Pro). As ProRS can inadvertently accommodate and process non-cognate amino acids such as alanine and cysteine, to avoid such errors it has two additional distinct editing activities against alanine. One activity is designated as 'pretransfer' editing and involves the tRNA(Pro)-independent hydrolysis of activated Ala-AMP. The other activity is designated 'posttransfer' editing and involves deacylation of mischarged Ala-tRNA(Pro). The misacylated Cys-tRNA(Pro) is not edited by ProRS. In Xylella fastidiosa (strain M12), this protein is Proline--tRNA ligase.